A 398-amino-acid polypeptide reads, in one-letter code: Fe-regulated protein 8 (398 aa).

Functionally, protein of unknown function; part of the gene cluster that mediates the biosynthesis of siderophore ferrichrome A which is contributing to organismal virulence. In Mycosarcoma maydis (Corn smut fungus), this protein is Fe-regulated protein 8.